A 106-amino-acid polypeptide reads, in one-letter code: PADSEHSAIFQCIQGLPEGALRRIILTASGGAFRDLPVEKLKEVKVADALKHPNWNMGKKITVDSATLFNKGLEVIEAHYLFGAEYDDIEIVIHPQSIIHSMVETQ.

Asp3 serves as a coordination point for Mn(2+). 1-deoxy-D-xylulose 5-phosphate contacts are provided by Ser4, Glu5, Ser29, His52, Ser65, Asn70, Lys71, and Glu74. Glu5 serves as a coordination point for Mn(2+). Glu74 contributes to the Mn(2+) binding site.

Belongs to the DXR family. Mn(2+) serves as cofactor. It depends on Mg(2+) as a cofactor.

The protein resides in the plastid. Its subcellular location is the chloroplast stroma. It catalyses the reaction 2-C-methyl-D-erythritol 4-phosphate + NADP(+) = 1-deoxy-D-xylulose 5-phosphate + NADPH + H(+). Its pathway is isoprenoid biosynthesis; isopentenyl diphosphate biosynthesis via DXP pathway; isopentenyl diphosphate from 1-deoxy-D-xylulose 5-phosphate: step 1/6. Enzyme of the plastid non-mevalonate pathway for isoprenoid biosynthesis that catalyzes the NADPH-dependent rearrangement and reduction of 1-deoxy-D-xylulose-5-phosphate (DXP) to 2-C-methyl-D-erythritol 4-phosphate (MEP). Required for chloroplast development. This Origanum vulgare (Wild marjoram) protein is 1-deoxy-D-xylulose 5-phosphate reductoisomerase.